Consider the following 634-residue polypeptide: Threonine--tRNA ligase (634 aa).

The TGS domain occupies 1–61; that stretch reads MINIRFPDGS…NSNCELRLIT (61 aa). The catalytic stretch occupies residues 241–532; the sequence is DHRKIGKVLD…LIEHYAGNLP (292 aa). Zn(2+) contacts are provided by Cys-332, His-383, and His-509.

Belongs to the class-II aminoacyl-tRNA synthetase family. As to quaternary structure, homodimer. Zn(2+) serves as cofactor.

Its subcellular location is the cytoplasm. The enzyme catalyses tRNA(Thr) + L-threonine + ATP = L-threonyl-tRNA(Thr) + AMP + diphosphate + H(+). In terms of biological role, catalyzes the attachment of threonine to tRNA(Thr) in a two-step reaction: L-threonine is first activated by ATP to form Thr-AMP and then transferred to the acceptor end of tRNA(Thr). Also edits incorrectly charged L-seryl-tRNA(Thr). The protein is Threonine--tRNA ligase of Francisella tularensis subsp. mediasiatica (strain FSC147).